The chain runs to 206 residues: Photosynthetic reaction center cytochrome c-551 (206 aa).

Helical transmembrane passes span 10–30, 49–69, and 76–96; these read IALAIGGAVLMGTLFFLVSFL, FMGWFLLIFCASLIIMGLGKM, and KWFLSFPLSIFVIVMVMFFSL. Residues C152, C155, H156, and M182 each coordinate heme.

Component of the photosynthetic reaction center. The reaction center interacts with the Fenna-Matthews-Olson (FMO, fmoA) complex. In terms of processing, binds 1 heme group per subunit.

It localises to the cell inner membrane. Its function is as follows. Monoheme cytochrome which is the immediate electron donor to P840 of the photosynthetic reaction center complex. This chain is Photosynthetic reaction center cytochrome c-551 (pscC), found in Chlorobaculum parvum (strain DSM 263 / NCIMB 8327) (Chlorobium vibrioforme subsp. thiosulfatophilum).